The following is a 141-amino-acid chain: Large ribosomal subunit protein bL17 (141 aa).

The protein belongs to the bacterial ribosomal protein bL17 family. In terms of assembly, part of the 50S ribosomal subunit. Contacts protein L32.

This Maridesulfovibrio salexigens (strain ATCC 14822 / DSM 2638 / NCIMB 8403 / VKM B-1763) (Desulfovibrio salexigens) protein is Large ribosomal subunit protein bL17.